The chain runs to 660 residues: Elongation factor 4 (660 aa).

A tr-type G domain is found at 55-241 (AQIRNFCIIA…EVVRQVPPPQ (187 aa)). GTP contacts are provided by residues 67–72 (DHGKST) and 188–191 (NKID).

This sequence belongs to the TRAFAC class translation factor GTPase superfamily. Classic translation factor GTPase family. LepA subfamily.

It is found in the cell membrane. The catalysed reaction is GTP + H2O = GDP + phosphate + H(+). Required for accurate and efficient protein synthesis under certain stress conditions. May act as a fidelity factor of the translation reaction, by catalyzing a one-codon backward translocation of tRNAs on improperly translocated ribosomes. Back-translocation proceeds from a post-translocation (POST) complex to a pre-translocation (PRE) complex, thus giving elongation factor G a second chance to translocate the tRNAs correctly. Binds to ribosomes in a GTP-dependent manner. This Mycolicibacterium paratuberculosis (strain ATCC BAA-968 / K-10) (Mycobacterium paratuberculosis) protein is Elongation factor 4.